We begin with the raw amino-acid sequence, 134 residues long: Terepressin/terephysin (134 aa).

The signal sequence occupies residues 1–33; the sequence is MKCSVLPRSRLSWTMCVLLLPLLMLMLEGGVQG. Cys-34 and Cys-39 are oxidised to a cystine. The propeptide occupies 44–50; that stretch reads KRAVDSV. 7 disulfide bridges follow: Cys-56–Cys-100, Cys-59–Cys-73, Cys-67–Cys-90, Cys-74–Cys-80, Cys-107–Cys-121, Cys-115–Cys-133, and Cys-122–Cys-127.

This sequence belongs to the vasopressin/oxytocin family. Post-translationally, contains 7 disulfide bonds. In terms of tissue distribution, expressed by the venom duct.

It is found in the secreted. The protein is Terepressin/terephysin of Terebra subulata (Chocolate spotted auger).